We begin with the raw amino-acid sequence, 341 residues long: Ferrochelatase (341 aa).

Positions 189 and 293 each coordinate Fe cation.

It belongs to the ferrochelatase family.

It is found in the cytoplasm. It catalyses the reaction heme b + 2 H(+) = protoporphyrin IX + Fe(2+). Its pathway is porphyrin-containing compound metabolism; protoheme biosynthesis; protoheme from protoporphyrin-IX: step 1/1. Functionally, catalyzes the ferrous insertion into protoporphyrin IX. This chain is Ferrochelatase, found in Stutzerimonas stutzeri (strain A1501) (Pseudomonas stutzeri).